We begin with the raw amino-acid sequence, 507 residues long: ATP synthase subunit alpha, chloroplastic (507 aa).

170-177 is an ATP binding site; the sequence is GDRQTGKT.

This sequence belongs to the ATPase alpha/beta chains family. As to quaternary structure, F-type ATPases have 2 components, CF(1) - the catalytic core - and CF(0) - the membrane proton channel. CF(1) has five subunits: alpha(3), beta(3), gamma(1), delta(1), epsilon(1). CF(0) has four main subunits: a, b, b' and c.

Its subcellular location is the plastid. The protein localises to the chloroplast thylakoid membrane. It carries out the reaction ATP + H2O + 4 H(+)(in) = ADP + phosphate + 5 H(+)(out). Its function is as follows. Produces ATP from ADP in the presence of a proton gradient across the membrane. The alpha chain is a regulatory subunit. The chain is ATP synthase subunit alpha, chloroplastic from Liriodendron tulipifera (Tuliptree).